A 164-amino-acid polypeptide reads, in one-letter code: Photosystem II extrinsic protein V (164 aa).

The first 27 residues, 1–27 (MNRISIYRIKVLAFLFAVSTYVYPASS), serve as a signal peptide directing secretion. Residues C64, C67, H68, and H119 each coordinate heme c.

This sequence belongs to the cytochrome c family. PsbV subfamily. As to quaternary structure, PSII is composed of 1 copy each of membrane proteins PsbA, PsbB, PsbC, PsbD, PsbE, PsbF, PsbH, PsbI, PsbJ, PsbK, PsbL, PsbM, PsbT, PsbY, PsbZ, Psb30/Ycf12, at least 3 peripheral proteins of the oxygen-evolving complex and a large number of cofactors. It forms dimeric complexes. The extrinsic subunits in red algae are PsbO (OEC33), PsbQ', cytochrome c-550 and PsbU. Requires heme c as cofactor.

The protein localises to the plastid. The protein resides in the chloroplast thylakoid membrane. In terms of biological role, one of the extrinsic, lumenal subunits of photosystem II (PSII). PSII is a light-driven water plastoquinone oxidoreductase, using light energy to abstract electrons from H(2)O, generating a proton gradient subsequently used for ATP formation. The extrinsic proteins stabilize the structure of photosystem II oxygen-evolving complex (OEC), the ion environment of oxygen evolution and protect the OEC against heat-induced inactivation. In Cyanidium caldarium (Red alga), this protein is Photosystem II extrinsic protein V.